A 281-amino-acid polypeptide reads, in one-letter code: Urease accessory protein UreD 2 (281 aa).

Belongs to the UreD family. UreD, UreF and UreG form a complex that acts as a GTP-hydrolysis-dependent molecular chaperone, activating the urease apoprotein by helping to assemble the nickel containing metallocenter of UreC. The UreE protein probably delivers the nickel.

Its subcellular location is the cytoplasm. Required for maturation of urease via the functional incorporation of the urease nickel metallocenter. In Pseudomonas syringae pv. syringae (strain B728a), this protein is Urease accessory protein UreD 2.